The chain runs to 269 residues: Peptide deformylase 1B, chloroplastic (269 aa).

A chloroplast-targeting transit peptide spans 1-51 (MAARLHLRLGPRLRGFASSFAPLLAAHPRALPLSRMGSVAPLAAARARRGF). Fe cation contacts are provided by cysteine 168 and histidine 210. The active site involves glutamate 211. Residue histidine 214 participates in Fe cation binding.

Belongs to the polypeptide deformylase family. As to quaternary structure, homodimer. It depends on Fe(2+) as a cofactor. In terms of tissue distribution, mainly expressed in mature leaves and sheaths.

It is found in the plastid. Its subcellular location is the chloroplast stroma. The protein localises to the mitochondrion. It carries out the reaction N-terminal N-formyl-L-methionyl-[peptide] + H2O = N-terminal L-methionyl-[peptide] + formate. Inhibited by actinonin. In terms of biological role, removes the formyl group from the N-terminal Met of newly synthesized proteins. The polypeptide is Peptide deformylase 1B, chloroplastic (PDF1B) (Oryza sativa subsp. japonica (Rice)).